The sequence spans 378 residues: UPF0754 membrane protein BALH_0780 (378 aa).

A run of 2 helical transmembrane segments spans residues 1–21 (MNIW…GGFT) and 357–377 (YLGA…LLFL).

It belongs to the UPF0754 family.

The protein localises to the cell membrane. This is UPF0754 membrane protein BALH_0780 from Bacillus thuringiensis (strain Al Hakam).